Reading from the N-terminus, the 125-residue chain is NADPH-dependent 7-cyano-7-deazaguanine reductase (125 aa).

The Thioimide intermediate role is filled by cysteine 40. Aspartate 47 acts as the Proton donor in catalysis. Residues 62-64 (LET) and 81-82 (HE) each bind substrate.

Belongs to the GTP cyclohydrolase I family. QueF type 1 subfamily.

It localises to the cytoplasm. The enzyme catalyses 7-aminomethyl-7-carbaguanine + 2 NADP(+) = 7-cyano-7-deazaguanine + 2 NADPH + 3 H(+). It participates in tRNA modification; tRNA-queuosine biosynthesis. Functionally, catalyzes the NADPH-dependent reduction of 7-cyano-7-deazaguanine (preQ0) to 7-aminomethyl-7-deazaguanine (preQ1). The sequence is that of NADPH-dependent 7-cyano-7-deazaguanine reductase from Frankia casuarinae (strain DSM 45818 / CECT 9043 / HFP020203 / CcI3).